The following is a 78-amino-acid chain: Translation initiation factor IF-1, chloroplastic (78 aa).

An S1-like domain is found at 1 to 72 (MKKQNLIDME…TKGRITYRLR (72 aa)).

This sequence belongs to the IF-1 family. In terms of assembly, component of the 30S ribosomal translation pre-initiation complex which assembles on the 30S ribosome in the order IF-2 and IF-3, IF-1 and N-formylmethionyl-tRNA(fMet); mRNA recruitment can occur at any time during PIC assembly.

Its subcellular location is the plastid. The protein localises to the chloroplast. Functionally, one of the essential components for the initiation of protein synthesis. Stabilizes the binding of IF-2 and IF-3 on the 30S subunit to which N-formylmethionyl-tRNA(fMet) subsequently binds. Helps modulate mRNA selection, yielding the 30S pre-initiation complex (PIC). Upon addition of the 50S ribosomal subunit IF-1, IF-2 and IF-3 are released leaving the mature 70S translation initiation complex. The protein is Translation initiation factor IF-1, chloroplastic of Physcomitrium patens (Spreading-leaved earth moss).